The following is a 247-amino-acid chain: Carboxy-S-adenosyl-L-methionine synthase (247 aa).

S-adenosyl-L-methionine is bound by residues Tyr-39, Gly-64–Ser-66, Asp-89–Asn-90, Asp-117–Ile-118, Asn-132, and Arg-199.

It belongs to the class I-like SAM-binding methyltransferase superfamily. Cx-SAM synthase family. As to quaternary structure, homodimer.

It carries out the reaction prephenate + S-adenosyl-L-methionine = carboxy-S-adenosyl-L-methionine + 3-phenylpyruvate + H2O. Its function is as follows. Catalyzes the conversion of S-adenosyl-L-methionine (SAM) to carboxy-S-adenosyl-L-methionine (Cx-SAM). This is Carboxy-S-adenosyl-L-methionine synthase from Salmonella choleraesuis (strain SC-B67).